The chain runs to 682 residues: MSTIDTTEKRERGDAALFDAAVLVAAMRAAFAKLAPRHLLRSPVMAVVMGGTVLAAVITASGHSHAGFGWAVTAILFVTVLFGNFAEAIAEARGRGQAASLRRARKDLVARRVETALGGRETRVPAAELRPGDYVMVSEGEFVPADGEIVRGVATINEAAVTGESAPVLREAGTDRSGVIGGTRVLSDEIVFKVTAEPGHSFLDRMIALVEGANRQKTPNEIALTLLLAAMTLTFLIVVASLPAIAGFVGVTLDPLLLIALLVCLIPTTIGGLLPAIGIAGMNRALSANVLAKSGKAVEVAGDVDVLLLDKTGTITYGDRQATAFHPLAGVDRVQLRDAAMLASLADPTPEGKSIVKLARQQGAIAVEAEGGDFIAFTAQTRMSGVDIGGRSIRKGAGDSIVAYVQAQGATVSPELQGRIEEVARGGATPLVVAEGRHVLGVVELSDVVKQGIKEKFAQLRAMGIKTVMITGDNPLTAAAIAAEAGVDDYIAQARPEDKLARIRAEQTGGRLVAMVGDGTNDAPALAQADVGLAMNSGTQAAKEAGNMVDLDSDPAKLLAVVEVGKQQLITRGALTTFSLANDVSKYFAILPALFAAAIPSMAALNVMQLSSPRHAVLAALIFNALIIPALIPLALRGVRFRPSSATALLRRNMMIYGVGGVLLPFAAIKAIDLALVAVLGA.

5 helical membrane-spanning segments follow: residues Ala-15 to Ala-35, Ser-42 to Gly-62, Ala-66 to Ala-86, Leu-233 to Leu-253, and Leu-257 to Ile-277. Asp-310 (4-aspartylphosphate intermediate) is an active-site residue. Residues Asp-347, Glu-351, Phe-377–Ser-384, and Lys-395 contribute to the ATP site. Residues Asp-518 and Asp-522 each contribute to the Mg(2+) site. 3 consecutive transmembrane segments (helical) span residues Phe-588–Met-608, Ala-616–Leu-636, and Val-662–Ala-682.

It belongs to the cation transport ATPase (P-type) (TC 3.A.3) family. Type IA subfamily. As to quaternary structure, the system is composed of three essential subunits: KdpA, KdpB and KdpC.

It localises to the cell inner membrane. The enzyme catalyses K(+)(out) + ATP + H2O = K(+)(in) + ADP + phosphate + H(+). Part of the high-affinity ATP-driven potassium transport (or Kdp) system, which catalyzes the hydrolysis of ATP coupled with the electrogenic transport of potassium into the cytoplasm. This subunit is responsible for energy coupling to the transport system and for the release of the potassium ions to the cytoplasm. This chain is Potassium-transporting ATPase ATP-binding subunit, found in Xanthomonas axonopodis pv. citri (strain 306).